A 240-amino-acid chain; its full sequence is Protein unc-119 homolog A (240 aa).

Gly residues predominate over residues 1 to 12 (MKVKKGGGGTGP). Residues 1–62 (MKVKKGGGGT…PLQGKQPIGP (62 aa)) are disordered. A phosphoserine; by CK2 mark is found at Ser-37, Ser-39, and Ser-41. Tyr-131 serves as a coordination point for tetradecanoate.

This sequence belongs to the PDE6D/unc-119 family. In terms of assembly, interacts with CABP4; in the absence of calcium. May interact with GTP-bound ARL1. Interacts with ARL2 and ARL3 (GTP-bound forms); this promotes the release of myristoylated cargo proteins. Found in a complex with ARL3, RP2 and UNC119; RP2 induces hydrolysis of GTP ARL3 in the complex, leading to the release of UNC119. Interacts with NPHP3 (when myristoylated). Interacts with CYS1 (when myristoylated). Interacts with MACIR; interaction only takes place when UNC119 is not liganded with myristoylated proteins. Interacts with ARL1 and ARL3 GTP-bound forms. Interacts with ARL2. Interacts with ARL2. Interacts with LCK; this interaction plays a crucial role in activation of LCK. Interacts with FYN. Interacts with RAB11A; in a cell cycle-dependent manner. Interacts with LYN (via SH2 and SH3 domains); leading to LYN activation. Interacts with DNM1; leading to a decrease of DNM1 GTPase activity. Found in a complex with ABL1, ABL2, CRK and UNC119; leading to the inhibition of CRK phosphorylation by ABL kinases. Interacts with CD44. Interacts with KLHL18 (via kelch repeats). Interacts with PPP3CA, PPP3CB and PPP3CC. Interacts with USP48; this interaction promotes UNC119 stability. In terms of processing, phosphorylation suppresses its interaction with KLHL18 and down-regulates its KLHL18-mediated degradation. Phosphorylated more under light conditions than dark conditions. Dephosphorylated by calcineurin.

Its subcellular location is the cytoplasm. The protein localises to the cytoskeleton. It localises to the microtubule organizing center. The protein resides in the centrosome. It is found in the spindle. Its subcellular location is the spindle pole. Functionally, involved in synaptic functions in photoreceptor cells, the signal transduction in immune cells as a Src family kinase activator, endosome recycling, the uptake of bacteria and endocytosis, protein trafficking in sensory neurons and as lipid-binding chaperone with specificity for a diverse subset of myristoylated proteins. Specifically binds the myristoyl moiety of a subset of N-terminally myristoylated proteins and is required for their localization. Binds myristoylated GNAT1 and is required for G-protein localization and trafficking in sensory neurons. Probably plays a role in trafficking proteins in photoreceptor cells. Plays important roles in mediating Src family kinase signals for the completion of cytokinesis via RAB11A. This Rattus norvegicus (Rat) protein is Protein unc-119 homolog A (Unc119).